The following is a 236-amino-acid chain: Ascorbate-specific transmembrane electron transporter 1 (236 aa).

The Cytoplasmic segment spans residues 1 to 11 (MGLGLGVRAAP). Residues 12–32 (FTYAAHALAVAAAAMVLVWSI) form a helical membrane-spanning segment. Residues 15–219 (AAHALAVAAA…FGASVVVAAI (205 aa)) form the Cytochrome b561 domain. Over 33–50 (QFRGGLAIESTNKNLIFN) the chain is Extracellular. A helical transmembrane segment spans residues 51–71 (VHPVLMLIGYVIIGGEAIMVY). H52 is a heme b binding site. 67–75 (AIMVYRVLP) is a binding site for L-ascorbate. The Cytoplasmic portion of the chain corresponds to 72-84 (RVLPTSNHDTTKL). A helical membrane pass occupies residues 85-105 (IHLILHGIALVLGAVGIYFAF). Residues H86 and H120 each coordinate heme b. At 106–122 (KNHNESGIANLYSLHSW) the chain is on the extracellular side. A monodehydro-L-ascorbate radical-binding site is contributed by 116-125 (LYSLHSWIGI). The helical transmembrane segment at 123–143 (IGIGTITLYGIQWIIGFVTFF) threads the bilayer. Topologically, residues 144 to 153 (FPGAAPNVKK) are cytoplasmic. A helical transmembrane segment spans residues 154–174 (GVLPWHVLFGLFVYILALANA). Residue H159 coordinates heme b. Over 175 to 201 (ELGFLEKLTFLESSGLDKYGTEAFLVN) the chain is Extracellular. Residues 202-222 (FTALVVVLFGASVVVAAIAPV) traverse the membrane as a helical segment. At 223–236 (RLEEPQGYDPIPEN) the chain is on the cytoplasmic side.

It depends on heme b as a cofactor.

The protein resides in the membrane. Inhibited by diethylpyrocarbonate. Functionally, two-heme-containing cytochrome. Catalyzes ascorbate-dependent trans-membrane electron transfer by utilizing a concerted H(+)/e(-) transfer mechanism. This Zea mays (Maize) protein is Ascorbate-specific transmembrane electron transporter 1 (ZCYB).